A 39-amino-acid chain; its full sequence is SPbeta prophage-derived membrane protein YosA (39 aa).

A helical membrane pass occupies residues Ser-19–Tyr-39.

It belongs to the SscA family.

Its subcellular location is the membrane. The protein is SPbeta prophage-derived membrane protein YosA (yosA) of Bacillus subtilis (strain 168).